Reading from the N-terminus, the 437-residue chain is CMP-5'-(3-aminopropyl)phosphonate hydroxylase (437 aa).

FAD serves as cofactor.

The enzyme catalyses CMP-5'-(3-aminopropyl)phosphonate + NADPH + O2 = CMP-5'-(N-hydroxy-3-aminopropyl)phosphonate + NADP(+) + H2O. It participates in antibiotic biosynthesis. In terms of biological role, hydroxylase involved in the biosynthesis of the phosphonate antibiotic FR-900098, a potent antimalarial agent that acts as an inhibitor of 1-deoxy-D-xylulose 5-phosphate reductoisomerase (DXR), the first enzyme in the nonmevalonate pathway for isoprenoid biosynthesis. Catalyzes the N-hydroxylation of CMP-5'-3-aminopropylphosphonate (CMP-5'-3APn) to CMP-5'-(N-hydroxy-3-aminopropyl)phosphonate (CMP-5'-H3APn). Cannot use CMP-5'-N-acetyl-3-aminopropylphosphonate (CMP-5'-Ac3APn) as a substrate. The chain is CMP-5'-(3-aminopropyl)phosphonate hydroxylase from Streptomyces rubellomurinus (strain ATCC 31215).